Consider the following 180-residue polypeptide: Large ribosomal subunit protein uL6 (180 aa).

The protein belongs to the universal ribosomal protein uL6 family. In terms of assembly, part of the 50S ribosomal subunit.

Its function is as follows. This protein binds to the 23S rRNA, and is important in its secondary structure. It is located near the subunit interface in the base of the L7/L12 stalk, and near the tRNA binding site of the peptidyltransferase center. This is Large ribosomal subunit protein uL6 from Protochlamydia amoebophila (strain UWE25).